A 370-amino-acid chain; its full sequence is Prolactin-releasing peptide receptor (370 aa).

The Extracellular segment spans residues 1–62 (MASLPTQGPA…LQLVHQLKGL (62 aa)). N-linked (GlcNAc...) asparagine glycosylation is found at asparagine 27 and asparagine 36. A helical membrane pass occupies residues 63–83 (IVLLYSIVVVVGLVGNCLLVL). The Cytoplasmic portion of the chain corresponds to 84-101 (VIARVRRLHNVTNFLIGN). A helical transmembrane segment spans residues 102 to 122 (LALSDVLMCTACVPLTLAYAF). At 123 to 126 (EPRG) the chain is on the extracellular side. A helical transmembrane segment spans residues 127–147 (WVFGGGLCHLVFFLQPVTVYV). A disulfide bridge links cysteine 134 with cysteine 211. The Cytoplasmic segment spans residues 148 to 175 (SVFTLTTIAVDRYVVLVHPLRRRISLRF). A helical transmembrane segment spans residues 176 to 196 (SAYAVLAIWALSAVLALPAAL). Residues 197-225 (HTYHVELKPHRVRLCEEFWGSQERQRQLY) lie on the Extracellular side of the membrane. Residues 226–246 (AWGLLLVTYLLPLLVILLSYV) traverse the membrane as a helical segment. Topologically, residues 247-276 (RVSVNLRNRVVPGCVTQSQADWDRARRRRT) are cytoplasmic. Residues 277–297 (FCLLVVVVVVFAVCWLPLHVF) form a helical membrane-spanning segment. Residues 298–317 (NLLRDLDPHAIDPYAFGLVQ) are Extracellular-facing. A helical membrane pass occupies residues 318 to 338 (LLCHWLAMSSACYNPFIYAWL). The Cytoplasmic portion of the chain corresponds to 339-369 (HDSFREELRKLLLAWPRKIAPHGQSMTVSVV). The segment at 365 to 370 (TVSVVI) is required for interaction with GRIP1, GRIP2 and PICK1.

Belongs to the G-protein coupled receptor 1 family. As to quaternary structure, interacts through its C-terminal region with the PDZ domain-containing proteins GRIP1, GRIP2 and PICK1. Interacts with PDZ domains 4 and 5 of GRIP1 and with the PDZ domain of PICK1.

Its subcellular location is the cell membrane. Its function is as follows. Receptor for prolactin-releasing peptide (PrRP). Implicated in lactation, regulation of food intake and pain-signal processing. The chain is Prolactin-releasing peptide receptor (PRLHR) from Bos taurus (Bovine).